The sequence spans 357 residues: Putative F-box protein At5g50220 (357 aa).

Residues 27–73 enclose the F-box domain; the sequence is IAEDIGIPIDLMVEILKKLPAKSLIKFQCVSKQWSSIIGSSRDFIDS.

In Arabidopsis thaliana (Mouse-ear cress), this protein is Putative F-box protein At5g50220.